Reading from the N-terminus, the 600-residue chain is Myelin expression factor 2 (600 aa).

The tract at residues 1–101 is disordered; the sequence is MADANKAEVP…GEKKGPNRNR (101 aa). A Phosphothreonine modification is found at Thr13. Ser17 is subject to Phosphoserine. The span at 27 to 42 shows a compositional bias: basic and acidic residues; it reads GEPRREPHPAEAEKQQ. Lys53 participates in a covalent cross-link: Glycyl lysine isopeptide (Lys-Gly) (interchain with G-Cter in SUMO2). Basic and acidic residues-rich tracts occupy residues 54–72 and 83–96; these read MENDESAKEEKSDLKEKST and YSKDKNSGAGEKKG. 2 consecutive RRM domains span residues 100–178 and 233–310; these read NRVF…EDPD and STIF…MDDK. Arg406 carries the post-translational modification Omega-N-methylarginine. Ser431 carries the post-translational modification Phosphoserine. In terms of domain architecture, RRM 3 spans 523-599; that stretch reads NQIFVRNLPF…REIDVRLDRN (77 aa).

As to quaternary structure, monomer.

It is found in the nucleus. In terms of biological role, transcriptional repressor of the myelin basic protein gene (MBP). Binds to the proximal MB1 element 5'-TTGTCC-3' of the MBP promoter. Its binding to MB1 and function are inhibited by PURA. In Homo sapiens (Human), this protein is Myelin expression factor 2 (MYEF2).